Reading from the N-terminus, the 371-residue chain is 3-dehydroquinate synthase (371 aa).

Residues 114-118 (GVVGD), 138-139 (TT), Lys-151, Lys-160, and 178-181 (TLNT) each bind NAD(+). Zn(2+) contacts are provided by Glu-193, His-258, and His-275.

It belongs to the sugar phosphate cyclases superfamily. Dehydroquinate synthase family. Requires Co(2+) as cofactor. It depends on Zn(2+) as a cofactor. The cofactor is NAD(+).

The protein localises to the cytoplasm. It carries out the reaction 7-phospho-2-dehydro-3-deoxy-D-arabino-heptonate = 3-dehydroquinate + phosphate. It functions in the pathway metabolic intermediate biosynthesis; chorismate biosynthesis; chorismate from D-erythrose 4-phosphate and phosphoenolpyruvate: step 2/7. Functionally, catalyzes the conversion of 3-deoxy-D-arabino-heptulosonate 7-phosphate (DAHP) to dehydroquinate (DHQ). The sequence is that of 3-dehydroquinate synthase from Synechococcus sp. (strain CC9605).